The sequence spans 367 residues: MHLPEDLVLEILSKVPAVSLARFRSTCRRWNALVVDGSFAKKHYAYGPRQYPIVIMLIEFRVYLVSIDLHGINNNNGAPSAKLTGQFSLKDPLSNSSEEVDIRNAFHCDGLLLCCTKDRRLVVWNPCSGETKWIQPRNSYKESDLYALGYDNRSSSYKILRMHPVGNPFHIESEVYDFASHSWRSVGVTTDFHIQTNESYGMNVKGTTYWFALSKDWWSSDDRRFLLSFDFSRERFQCLPLPADVKNLHLTVVLSVTREEQQLCMFATLGAGNVYKLDVFVATKTEETTGELTWTKFRRFHSKICINVSADHEKKVLVPHHILLPYYNILHIVGEDIYIRQVNKDGDIGCPILLTYVPSLVQIQQGI.

The F-box domain occupies Met-1 to His-43.

The protein is Putative F-box protein At3g21120 of Arabidopsis thaliana (Mouse-ear cress).